A 205-amino-acid polypeptide reads, in one-letter code: Holliday junction branch migration complex subunit RuvA (205 aa).

Residues 1–64 (MIGRLRGVLI…EDAQLLYGFI (64 aa)) form a domain I region. Positions 65–143 (TKKERSLFRL…SLMEASVGSE (79 aa)) are domain II. The segment at 144–156 (REFVLQSNYSPAP) is flexible linker. The tract at residues 157–205 (TVNSAEEDAISALLSLGYKPPQASKAVSAAYKEGMDSETLIKAALKSML) is domain III.

Belongs to the RuvA family. As to quaternary structure, homotetramer. Forms an RuvA(8)-RuvB(12)-Holliday junction (HJ) complex. HJ DNA is sandwiched between 2 RuvA tetramers; dsDNA enters through RuvA and exits via RuvB. An RuvB hexamer assembles on each DNA strand where it exits the tetramer. Each RuvB hexamer is contacted by two RuvA subunits (via domain III) on 2 adjacent RuvB subunits; this complex drives branch migration. In the full resolvosome a probable DNA-RuvA(4)-RuvB(12)-RuvC(2) complex forms which resolves the HJ.

Its subcellular location is the cytoplasm. The RuvA-RuvB-RuvC complex processes Holliday junction (HJ) DNA during genetic recombination and DNA repair, while the RuvA-RuvB complex plays an important role in the rescue of blocked DNA replication forks via replication fork reversal (RFR). RuvA specifically binds to HJ cruciform DNA, conferring on it an open structure. The RuvB hexamer acts as an ATP-dependent pump, pulling dsDNA into and through the RuvAB complex. HJ branch migration allows RuvC to scan DNA until it finds its consensus sequence, where it cleaves and resolves the cruciform DNA. The protein is Holliday junction branch migration complex subunit RuvA of Shewanella sp. (strain MR-4).